Consider the following 364-residue polypeptide: tRNA-specific 2-thiouridylase MnmA (364 aa).

Residues 6–13 (AMSGGVDS) and L32 each bind ATP. C101 functions as the Nucleophile in the catalytic mechanism. C101 and C193 are oxidised to a cystine. G125 is a binding site for ATP. The segment at 143-145 (KDQ) is interaction with tRNA. C193 serves as the catalytic Cysteine persulfide intermediate.

Belongs to the MnmA/TRMU family.

It is found in the cytoplasm. It catalyses the reaction S-sulfanyl-L-cysteinyl-[protein] + uridine(34) in tRNA + AH2 + ATP = 2-thiouridine(34) in tRNA + L-cysteinyl-[protein] + A + AMP + diphosphate + H(+). Functionally, catalyzes the 2-thiolation of uridine at the wobble position (U34) of tRNA, leading to the formation of s(2)U34. In Rhodococcus opacus (strain B4), this protein is tRNA-specific 2-thiouridylase MnmA.